Reading from the N-terminus, the 427-residue chain is Enolase (427 aa).

Gln163 is a binding site for (2R)-2-phosphoglycerate. Residue Glu205 is the Proton donor of the active site. Mg(2+)-binding residues include Asp242, Glu285, and Asp312. (2R)-2-phosphoglycerate-binding residues include Lys337, Arg366, Ser367, and Lys388. The active-site Proton acceptor is Lys337.

The protein belongs to the enolase family. The cofactor is Mg(2+).

The protein resides in the cytoplasm. It localises to the secreted. The protein localises to the cell surface. The enzyme catalyses (2R)-2-phosphoglycerate = phosphoenolpyruvate + H2O. The protein operates within carbohydrate degradation; glycolysis; pyruvate from D-glyceraldehyde 3-phosphate: step 4/5. Catalyzes the reversible conversion of 2-phosphoglycerate (2-PG) into phosphoenolpyruvate (PEP). It is essential for the degradation of carbohydrates via glycolysis. The chain is Enolase from Nitrobacter hamburgensis (strain DSM 10229 / NCIMB 13809 / X14).